The sequence spans 155 residues: RNA pyrophosphohydrolase (155 aa).

The Nudix hydrolase domain occupies 6–148 (GYRANVAIVL…KQEVYRKALT (143 aa)). A Nudix box motif is present at residues 38–59 (GGVATGETPLQAMYRELHEEIG).

The protein belongs to the Nudix hydrolase family. RppH subfamily. Requires a divalent metal cation as cofactor.

Accelerates the degradation of transcripts by removing pyrophosphate from the 5'-end of triphosphorylated RNA, leading to a more labile monophosphorylated state that can stimulate subsequent ribonuclease cleavage. The sequence is that of RNA pyrophosphohydrolase from Francisella tularensis subsp. tularensis (strain FSC 198).